A 276-amino-acid polypeptide reads, in one-letter code: Type 2 phosphatidylinositol 4,5-bisphosphate 4-phosphatase (276 aa).

A compositionally biased stretch (basic and acidic residues) spans 1–10; the sequence is MAADGIDERS. A disordered region spans residues 1 to 27; sequence MAADGIDERSPLISPSSGNVTPTAPPY. The segment covering 13–27 has biased composition (polar residues); it reads ISPSSGNVTPTAPPY. Residue Cys-106 is part of the active site. The CX5R motif signature appears at 106 to 112; that stretch reads CKDISRR. A run of 2 helical transmembrane segments spans residues 211–231 and 246–266; these read CCTY…LTVG and WAVA…WGAI.

Its subcellular location is the late endosome membrane. It localises to the lysosome membrane. It catalyses the reaction a 1,2-diacyl-sn-glycero-3-phospho-(1D-myo-inositol-4,5-bisphosphate) + H2O = a 1,2-diacyl-sn-glycero-3-phospho-(1D-myo-inositol-5-phosphate) + phosphate. In terms of biological role, catalyzes the hydrolysis of phosphatidylinositol-4,5-bisphosphate (PtdIns-4,5-P2) to phosphatidylinositol-4-phosphate (PtdIns-4-P). This Xenopus tropicalis (Western clawed frog) protein is Type 2 phosphatidylinositol 4,5-bisphosphate 4-phosphatase (pip4p2).